A 497-amino-acid polypeptide reads, in one-letter code: Beta-glucosidase 8 (497 aa).

Residues 1 to 22 (MKHFNLLSIILVIVLATSYIDA) form the signal peptide. Q42 contacts a beta-D-glucoside. N65 carries N-linked (GlcNAc...) asparagine glycosylation. A beta-D-glucoside is bound by residues H139 and 184–185 (NE). Residue E185 is the Proton donor of the active site. A glycan (N-linked (GlcNAc...) asparagine) is linked at N202. Residue Y319 participates in a beta-D-glucoside binding. N354 carries N-linked (GlcNAc...) asparagine glycosylation. A beta-D-glucoside is bound by residues E387, W430, and F446. E387 acts as the Nucleophile in catalysis. 3 N-linked (GlcNAc...) asparagine glycosylation sites follow: N452, N474, and N490.

This sequence belongs to the glycosyl hydrolase 1 family.

It catalyses the reaction Hydrolysis of terminal, non-reducing beta-D-glucosyl residues with release of beta-D-glucose.. In Arabidopsis thaliana (Mouse-ear cress), this protein is Beta-glucosidase 8.